An 89-amino-acid polypeptide reads, in one-letter code: Mitochondrial import inner membrane translocase subunit Tim9 (89 aa).

A2 is subject to N-acetylalanine. The Twin CX3C motif motif lies at 28–52; sequence CFLDCVKDFTTREVKPEETTCSEHC. 2 disulfide bridges follow: C28–C52 and C32–C48.

The protein belongs to the small Tim family. Heterohexamer; composed of 3 copies of TIMM9 and 3 copies of TIMM10/TIM10A, named soluble 70 kDa complex. The complex forms a 6-bladed alpha-propeller structure and associates with the TIMM22 component of the TIM22 complex. Interacts with multi-pass transmembrane proteins in transit. Also forms a complex composed of TIMM9, TIMM10/TIM10A and FXC1/TIM10B. Ubiquitous, with highest expression in heart, kidney, liver and skeletal muscle.

The protein localises to the mitochondrion inner membrane. Functionally, mitochondrial intermembrane chaperone that participates in the import and insertion of multi-pass transmembrane proteins into the mitochondrial inner membrane. May also be required for the transfer of beta-barrel precursors from the TOM complex to the sorting and assembly machinery (SAM complex) of the outer membrane. Acts as a chaperone-like protein that protects the hydrophobic precursors from aggregation and guide them through the mitochondrial intermembrane space. The sequence is that of Mitochondrial import inner membrane translocase subunit Tim9 (TIMM9) from Homo sapiens (Human).